Here is a 211-residue protein sequence, read N- to C-terminus: GATA transcription factor 19 (211 aa).

The segment at Cys77 to Cys102 adopts a GATA-type zinc-finger fold. Residues Arg111–Pro131 form a disordered region.

This sequence belongs to the type IV zinc-finger family. Class B subfamily. In terms of assembly, forms heterodimers with GATA18.

The protein resides in the nucleus. In terms of biological role, transcriptional regulator that specifically binds 5'-GATA-3' or 5'-GAT-3' motifs within gene promoters. Regulates both flower and shoot apical meristem (SAM) development, especially for establishing organ boundaries in shoots and flowers, probably by controlling the number and position of WUS-expressing cells. In Arabidopsis thaliana (Mouse-ear cress), this protein is GATA transcription factor 19.